A 258-amino-acid chain; its full sequence is Small ribosomal subunit protein uS2 (258 aa).

The segment at 227 to 258 (GEQFAPASEQKEEVKTQEVQEVEDSNDDVIDD) is disordered. A compositionally biased stretch (basic and acidic residues) spans 235–244 (EQKEEVKTQE). Acidic residues predominate over residues 246–258 (QEVEDSNDDVIDD).

The protein belongs to the universal ribosomal protein uS2 family.

This is Small ribosomal subunit protein uS2 from Caldicellulosiruptor saccharolyticus (strain ATCC 43494 / DSM 8903 / Tp8T 6331).